The primary structure comprises 155 residues: Ribosomal RNA large subunit methyltransferase H (155 aa).

Residues leucine 72, glycine 103, and 122–127 (LSKLTM) each bind S-adenosyl-L-methionine.

It belongs to the RNA methyltransferase RlmH family. In terms of assembly, homodimer.

It is found in the cytoplasm. The enzyme catalyses pseudouridine(1915) in 23S rRNA + S-adenosyl-L-methionine = N(3)-methylpseudouridine(1915) in 23S rRNA + S-adenosyl-L-homocysteine + H(+). In terms of biological role, specifically methylates the pseudouridine at position 1915 (m3Psi1915) in 23S rRNA. In Methylobacillus flagellatus (strain ATCC 51484 / DSM 6875 / VKM B-1610 / KT), this protein is Ribosomal RNA large subunit methyltransferase H.